The chain runs to 269 residues: Diaminopimelate epimerase (269 aa).

Residues N15, Q49, and N66 each coordinate substrate. C75 serves as the catalytic Proton donor. Substrate is bound by residues 76 to 77 (GN), N155, N187, and 204 to 205 (ER). C213 (proton acceptor) is an active-site residue. 214 to 215 (GS) lines the substrate pocket.

It belongs to the diaminopimelate epimerase family. In terms of assembly, homodimer.

Its subcellular location is the cytoplasm. It catalyses the reaction (2S,6S)-2,6-diaminopimelate = meso-2,6-diaminopimelate. Its pathway is amino-acid biosynthesis; L-lysine biosynthesis via DAP pathway; DL-2,6-diaminopimelate from LL-2,6-diaminopimelate: step 1/1. Its function is as follows. Catalyzes the stereoinversion of LL-2,6-diaminopimelate (L,L-DAP) to meso-diaminopimelate (meso-DAP), a precursor of L-lysine and an essential component of the bacterial peptidoglycan. The protein is Diaminopimelate epimerase of Rickettsia bellii (strain OSU 85-389).